We begin with the raw amino-acid sequence, 473 residues long: Photosystem II CP43 reaction center protein (473 aa).

Positions 1-14 (MKTLYSLRRFYHVE) are excised as a propeptide. The residue at position 15 (Thr15) is an N-acetylthreonine. The residue at position 15 (Thr15) is a Phosphothreonine. The next 5 membrane-spanning stretches (helical) occupy residues 69 to 93 (LFEVAHFVPEKPMYEQGLILLPHLA), 134 to 155 (LLGPETLEESFPFFGYVWKDRN), 178 to 200 (KALYFGGVYDTWAPGGGDVRKIT), 255 to 275 (KPFAWARRALVWSGEAYLSYS), and 291 to 312 (WFNNTAYPSEFYGPTGPEASQA). Glu367 is a [CaMn4O5] cluster binding site. A helical membrane pass occupies residues 447–471 (RARAAAAGFEKGIDRDFEPVLSMTP).

Belongs to the PsbB/PsbC family. PsbC subfamily. PSII is composed of 1 copy each of membrane proteins PsbA, PsbB, PsbC, PsbD, PsbE, PsbF, PsbH, PsbI, PsbJ, PsbK, PsbL, PsbM, PsbT, PsbX, PsbY, PsbZ, Psb30/Ycf12, at least 3 peripheral proteins of the oxygen-evolving complex and a large number of cofactors. It forms dimeric complexes. Requires Binds multiple chlorophylls and provides some of the ligands for the Ca-4Mn-5O cluster of the oxygen-evolving complex. It may also provide a ligand for a Cl- that is required for oxygen evolution. PSII binds additional chlorophylls, carotenoids and specific lipids. as cofactor.

The protein resides in the plastid. Its subcellular location is the chloroplast thylakoid membrane. One of the components of the core complex of photosystem II (PSII). It binds chlorophyll and helps catalyze the primary light-induced photochemical processes of PSII. PSII is a light-driven water:plastoquinone oxidoreductase, using light energy to abstract electrons from H(2)O, generating O(2) and a proton gradient subsequently used for ATP formation. In Atropa belladonna (Belladonna), this protein is Photosystem II CP43 reaction center protein.